The following is a 95-amino-acid chain: UPF0235 protein AnaeK_1146 (95 aa).

Belongs to the UPF0235 family.

This Anaeromyxobacter sp. (strain K) protein is UPF0235 protein AnaeK_1146.